The chain runs to 123 residues: Cell division protein SepF (123 aa).

The protein belongs to the SepF family. Homodimer. Interacts with FtsZ.

It localises to the cytoplasm. In terms of biological role, cell division protein that is part of the divisome complex and is recruited early to the Z-ring. Probably stimulates Z-ring formation, perhaps through the cross-linking of FtsZ protofilaments. Its function overlaps with FtsA. The sequence is that of Cell division protein SepF from Tropheryma whipplei (strain TW08/27) (Whipple's bacillus).